We begin with the raw amino-acid sequence, 365 residues long: MGLFGLLKYAHRHRLVRSEAISTPPGVLTPIAIDLWNVMYTLMEKHYQETTEDNATTTARCLLRLLRMLHKRTYFPIFVSDRGIFGNGRIARGAKAIMAAAVRADGDGAADAPPRPRWSTMLHAPRIVHRLCVNLIRHMGYAYVDVSDMEADDVCANLYHTNTVAQVHTTDTDMILTGCDMILDIAPVFPLVLRCRDVLASLGVDYSEFLAAFVRCHTDLHRAPDVDSVQQVAESLEGREVAPEDVKLKYASRCPDIMRDAGKALALLPAAGDARSPRAEREFIQHVVAMLTPARHGHLSVLRRVPIVQEPSDVNKVFGSLLRHVKNETRAKELAGLFWKHIPPPPNYQAVLMAYWDDCNAHRRK.

Belongs to the herpesviridae VHS protein family.

The protein resides in the virion. Functionally, minor structural protein that acts as an endoribonuclease during lytic infection. Degrades host mRNAs in the cytoplasm by cutting them at preferred sites, including some in regions of translation initiation. This chain is Virion host shutoff protein (VHS), found in Sus scrofa (Pig).